Reading from the N-terminus, the 240-residue chain is Manganese transport system ATP-binding protein MntB (240 aa).

In terms of domain architecture, ABC transporter spans 1–233 (MNIQGLTIAY…KIQFAYGDAP (233 aa)). An ATP-binding site is contributed by 33-40 (GPNGAGKS).

This sequence belongs to the ABC transporter superfamily.

The protein resides in the cell membrane. Its function is as follows. This protein is probably a component of a manganese permease, a binding protein-dependent, ATP-driven transport system. Probably responsible for energy coupling to the transport system. This Listeria innocua serovar 6a (strain ATCC BAA-680 / CLIP 11262) protein is Manganese transport system ATP-binding protein MntB (mntB).